The sequence spans 186 residues: dCTP deaminase (186 aa).

107–112 (KSTYAR) lines the dCTP pocket. Residue Glu-133 is the Proton donor/acceptor of the active site. DCTP contacts are provided by Gln-152, Tyr-166, and Gln-176.

This sequence belongs to the dCTP deaminase family. As to quaternary structure, homotrimer.

It carries out the reaction dCTP + H2O + H(+) = dUTP + NH4(+). The protein operates within pyrimidine metabolism; dUMP biosynthesis; dUMP from dCTP (dUTP route): step 1/2. Its function is as follows. Catalyzes the deamination of dCTP to dUTP. This is dCTP deaminase from Campylobacter jejuni (strain RM1221).